Here is a 37-residue protein sequence, read N- to C-terminus: Large ribosomal subunit protein bL36c (37 aa).

This sequence belongs to the bacterial ribosomal protein bL36 family.

It localises to the plastid. It is found in the chloroplast. In Chlorella vulgaris (Green alga), this protein is Large ribosomal subunit protein bL36c (rpl36).